A 548-amino-acid chain; its full sequence is 5-aminolevulinate synthase, mitochondrial (548 aa).

The transit peptide at 1-22 (MQRSIFARFGNSSAAVSTLNRL) directs the protein to the mitochondrion. The substrate site is built by arginine 91, serine 204, and lysine 223. The pyridoxal 5'-phosphate site is built by serine 256, histidine 284, and threonine 334. Residue lysine 337 is part of the active site. Lysine 337 carries the post-translational modification N6-(pyridoxal phosphate)lysine. Threonine 366 and threonine 367 together coordinate pyridoxal 5'-phosphate. Threonine 452 is a binding site for substrate.

Belongs to the class-II pyridoxal-phosphate-dependent aminotransferase family. As to quaternary structure, homodimer. Interacts with MCX1. It depends on pyridoxal 5'-phosphate as a cofactor.

The protein localises to the mitochondrion matrix. The enzyme catalyses succinyl-CoA + glycine + H(+) = 5-aminolevulinate + CO2 + CoA. It participates in porphyrin-containing compound metabolism; protoporphyrin-IX biosynthesis; 5-aminolevulinate from glycine: step 1/1. Ihnhibited by hemin. Functionally, catalyzes the synthesis of 5-aminolevulinate (ALA) from succinyl-CoA and glycine, the first and rate-limiting step in heme biosynthesis. In Saccharomyces cerevisiae (strain ATCC 204508 / S288c) (Baker's yeast), this protein is 5-aminolevulinate synthase, mitochondrial.